We begin with the raw amino-acid sequence, 98 residues long: Citrate lyase acyl carrier protein (98 aa).

The residue at position 14 (S14) is an O-(phosphoribosyl dephospho-coenzyme A)serine.

It belongs to the CitD family. In terms of assembly, oligomer with a subunit composition of (alpha,beta,gamma)6.

Its subcellular location is the cytoplasm. Its function is as follows. Covalent carrier of the coenzyme of citrate lyase. This is Citrate lyase acyl carrier protein from Citrobacter koseri (strain ATCC BAA-895 / CDC 4225-83 / SGSC4696).